The following is a 64-amino-acid chain: Large ribosomal subunit protein bL35 (64 aa).

This sequence belongs to the bacterial ribosomal protein bL35 family.

This chain is Large ribosomal subunit protein bL35, found in Amoebophilus asiaticus (strain 5a2).